Consider the following 167-residue polypeptide: uncharacterized protein (167 aa).

This is an uncharacterized protein from Sus scrofa (Pig).